The sequence spans 206 residues: Holliday junction branch migration complex subunit RuvA (206 aa).

The interval Met-1–Leu-68 is domain I. Positions Glu-69–Ala-147 are domain II. A flexible linker region spans residues Ala-147–Arg-151. Positions Ala-152–Gly-206 are domain III.

Belongs to the RuvA family. In terms of assembly, homotetramer. Forms an RuvA(8)-RuvB(12)-Holliday junction (HJ) complex. HJ DNA is sandwiched between 2 RuvA tetramers; dsDNA enters through RuvA and exits via RuvB. An RuvB hexamer assembles on each DNA strand where it exits the tetramer. Each RuvB hexamer is contacted by two RuvA subunits (via domain III) on 2 adjacent RuvB subunits; this complex drives branch migration. In the full resolvosome a probable DNA-RuvA(4)-RuvB(12)-RuvC(2) complex forms which resolves the HJ.

Its subcellular location is the cytoplasm. In terms of biological role, the RuvA-RuvB-RuvC complex processes Holliday junction (HJ) DNA during genetic recombination and DNA repair, while the RuvA-RuvB complex plays an important role in the rescue of blocked DNA replication forks via replication fork reversal (RFR). RuvA specifically binds to HJ cruciform DNA, conferring on it an open structure. The RuvB hexamer acts as an ATP-dependent pump, pulling dsDNA into and through the RuvAB complex. HJ branch migration allows RuvC to scan DNA until it finds its consensus sequence, where it cleaves and resolves the cruciform DNA. In Gloeobacter violaceus (strain ATCC 29082 / PCC 7421), this protein is Holliday junction branch migration complex subunit RuvA.